The chain runs to 134 residues: Auxin-responsive protein SAUR40 (134 aa).

Belongs to the ARG7 family. As to quaternary structure, interacts with and inhibits PP2C-D subfamily of type 2C phosphatases such as PP2C67/PP2C-D1.

Its subcellular location is the cytoplasm. Its function is as follows. Provide a mechanistic link between auxin and plasma membrane H(+)-ATPases (PM H(+)-ATPases, e.g. AHA1 and AHA2), and triggers PM H(+)-ATPases activity by promoting phosphorylation of their C-terminal autoinhibitory domain as a result of PP2C-D subfamily of type 2C phosphatases inhibition, thus leading to the acidification of the apoplast and the facilitation of solutes and water uptake to drive cell expansion. Plays a role in the regulation of cell expansion, root meristem patterning and auxin transport. This Arabidopsis thaliana (Mouse-ear cress) protein is Auxin-responsive protein SAUR40.